The primary structure comprises 340 residues: Glycerol-3-phosphate dehydrogenase [NAD(P)+] (340 aa).

NADPH is bound by residues Ser-14, Phe-15, Arg-35, and Lys-108. 2 residues coordinate sn-glycerol 3-phosphate: Lys-108 and Gly-136. Ala-140 is a binding site for NADPH. Lys-191, Asp-244, Ser-254, Arg-255, and Asn-256 together coordinate sn-glycerol 3-phosphate. Lys-191 acts as the Proton acceptor in catalysis. Arg-255 is a binding site for NADPH. NADPH-binding residues include Val-279 and Glu-281.

Belongs to the NAD-dependent glycerol-3-phosphate dehydrogenase family.

The protein localises to the cytoplasm. It catalyses the reaction sn-glycerol 3-phosphate + NAD(+) = dihydroxyacetone phosphate + NADH + H(+). The enzyme catalyses sn-glycerol 3-phosphate + NADP(+) = dihydroxyacetone phosphate + NADPH + H(+). The protein operates within membrane lipid metabolism; glycerophospholipid metabolism. Functionally, catalyzes the reduction of the glycolytic intermediate dihydroxyacetone phosphate (DHAP) to sn-glycerol 3-phosphate (G3P), the key precursor for phospholipid synthesis. The chain is Glycerol-3-phosphate dehydrogenase [NAD(P)+] from Azotobacter vinelandii (strain DJ / ATCC BAA-1303).